We begin with the raw amino-acid sequence, 340 residues long: 4-hydroxy-3-methylbut-2-enyl diphosphate reductase (340 aa).

Cys-21 is a binding site for [4Fe-4S] cluster. Positions 50 and 83 each coordinate (2E)-4-hydroxy-3-methylbut-2-enyl diphosphate. Residues His-50 and His-83 each contribute to the dimethylallyl diphosphate site. Isopentenyl diphosphate contacts are provided by His-50 and His-83. Residue Cys-105 coordinates [4Fe-4S] cluster. Residue His-133 coordinates (2E)-4-hydroxy-3-methylbut-2-enyl diphosphate. A dimethylallyl diphosphate-binding site is contributed by His-133. His-133 is an isopentenyl diphosphate binding site. Glu-135 functions as the Proton donor in the catalytic mechanism. A (2E)-4-hydroxy-3-methylbut-2-enyl diphosphate-binding site is contributed by Thr-173. Position 203 (Cys-203) interacts with [4Fe-4S] cluster. 4 residues coordinate (2E)-4-hydroxy-3-methylbut-2-enyl diphosphate: Ser-231, Ser-232, Asn-233, and Ser-276. Dimethylallyl diphosphate is bound by residues Ser-231, Ser-232, Asn-233, and Ser-276. Isopentenyl diphosphate is bound by residues Ser-231, Ser-232, Asn-233, and Ser-276. The disordered stretch occupies residues 320 to 340 (KARGEPLTRSATAGDRMNADR).

Belongs to the IspH family. [4Fe-4S] cluster serves as cofactor.

It carries out the reaction isopentenyl diphosphate + 2 oxidized [2Fe-2S]-[ferredoxin] + H2O = (2E)-4-hydroxy-3-methylbut-2-enyl diphosphate + 2 reduced [2Fe-2S]-[ferredoxin] + 2 H(+). It catalyses the reaction dimethylallyl diphosphate + 2 oxidized [2Fe-2S]-[ferredoxin] + H2O = (2E)-4-hydroxy-3-methylbut-2-enyl diphosphate + 2 reduced [2Fe-2S]-[ferredoxin] + 2 H(+). The protein operates within isoprenoid biosynthesis; dimethylallyl diphosphate biosynthesis; dimethylallyl diphosphate from (2E)-4-hydroxy-3-methylbutenyl diphosphate: step 1/1. It participates in isoprenoid biosynthesis; isopentenyl diphosphate biosynthesis via DXP pathway; isopentenyl diphosphate from 1-deoxy-D-xylulose 5-phosphate: step 6/6. Functionally, catalyzes the conversion of 1-hydroxy-2-methyl-2-(E)-butenyl 4-diphosphate (HMBPP) into a mixture of isopentenyl diphosphate (IPP) and dimethylallyl diphosphate (DMAPP). Acts in the terminal step of the DOXP/MEP pathway for isoprenoid precursor biosynthesis. The polypeptide is 4-hydroxy-3-methylbut-2-enyl diphosphate reductase (Acidothermus cellulolyticus (strain ATCC 43068 / DSM 8971 / 11B)).